The sequence spans 399 residues: Formate-dependent phosphoribosylglycinamide formyltransferase (399 aa).

N(1)-(5-phospho-beta-D-ribosyl)glycinamide contacts are provided by residues Glu8–Leu9 and Glu68. ATP contacts are provided by residues Arg100, Lys141, Ser146–Gln151, Glu185–Ala188, and Glu193. An ATP-grasp domain is found at Val105–Leu308. Mg(2+) contacts are provided by Glu266 and Glu279. N(1)-(5-phospho-beta-D-ribosyl)glycinamide is bound by residues Asp286, Lys361, and Arg368–Arg369.

The protein belongs to the PurK/PurT family. In terms of assembly, homodimer.

It catalyses the reaction N(1)-(5-phospho-beta-D-ribosyl)glycinamide + formate + ATP = N(2)-formyl-N(1)-(5-phospho-beta-D-ribosyl)glycinamide + ADP + phosphate + H(+). The protein operates within purine metabolism; IMP biosynthesis via de novo pathway; N(2)-formyl-N(1)-(5-phospho-D-ribosyl)glycinamide from N(1)-(5-phospho-D-ribosyl)glycinamide (formate route): step 1/1. Functionally, involved in the de novo purine biosynthesis. Catalyzes the transfer of formate to 5-phospho-ribosyl-glycinamide (GAR), producing 5-phospho-ribosyl-N-formylglycinamide (FGAR). Formate is provided by PurU via hydrolysis of 10-formyl-tetrahydrofolate. The chain is Formate-dependent phosphoribosylglycinamide formyltransferase from Bifidobacterium adolescentis (strain ATCC 15703 / DSM 20083 / NCTC 11814 / E194a).